Reading from the N-terminus, the 344-residue chain is Dihydroorotase (344 aa).

2 residues coordinate Zn(2+): His-14 and His-16. Substrate-binding positions include 16 to 18 and Asn-42; that span reads HLR. Residues Lys-100, His-137, and His-175 each contribute to the Zn(2+) site. Lys-100 carries the N6-carboxylysine modification. His-137 is a binding site for substrate. A substrate-binding site is contributed by Leu-220. Asp-248 lines the Zn(2+) pocket. Residue Asp-248 is part of the active site. Substrate contacts are provided by His-252 and Ala-264.

Belongs to the metallo-dependent hydrolases superfamily. DHOase family. Class II DHOase subfamily. In terms of assembly, homodimer. The cofactor is Zn(2+).

It catalyses the reaction (S)-dihydroorotate + H2O = N-carbamoyl-L-aspartate + H(+). It functions in the pathway pyrimidine metabolism; UMP biosynthesis via de novo pathway; (S)-dihydroorotate from bicarbonate: step 3/3. In terms of biological role, catalyzes the reversible cyclization of carbamoyl aspartate to dihydroorotate. The sequence is that of Dihydroorotase from Cupriavidus necator (strain ATCC 17699 / DSM 428 / KCTC 22496 / NCIMB 10442 / H16 / Stanier 337) (Ralstonia eutropha).